Consider the following 219-residue polypeptide: NADH-quinone oxidoreductase subunit C (219 aa).

The protein belongs to the complex I 30 kDa subunit family. In terms of assembly, NDH-1 is composed of 14 different subunits. Subunits NuoB, C, D, E, F, and G constitute the peripheral sector of the complex.

It is found in the cell inner membrane. It carries out the reaction a quinone + NADH + 5 H(+)(in) = a quinol + NAD(+) + 4 H(+)(out). Its function is as follows. NDH-1 shuttles electrons from NADH, via FMN and iron-sulfur (Fe-S) centers, to quinones in the respiratory chain. The immediate electron acceptor for the enzyme in this species is believed to be ubiquinone. Couples the redox reaction to proton translocation (for every two electrons transferred, four hydrogen ions are translocated across the cytoplasmic membrane), and thus conserves the redox energy in a proton gradient. The protein is NADH-quinone oxidoreductase subunit C of Methylorubrum populi (strain ATCC BAA-705 / NCIMB 13946 / BJ001) (Methylobacterium populi).